A 147-amino-acid polypeptide reads, in one-letter code: Large ribosomal subunit protein uL16 (147 aa).

The span at 1-16 shows a compositional bias: basic residues; sequence MLMPKRVKRRRVHRGR. Residues 1–20 form a disordered region; sequence MLMPKRVKRRRVHRGRMTGQ.

This sequence belongs to the universal ribosomal protein uL16 family. In terms of assembly, part of the 50S ribosomal subunit.

Binds 23S rRNA and is also seen to make contacts with the A and possibly P site tRNAs. This is Large ribosomal subunit protein uL16 from Alkaliphilus metalliredigens (strain QYMF).